The sequence spans 227 residues: MKISYHGHSVVKIETNGKVIVIDPFLTGNPKTDLKAEDVKVDAILLSHGHGDHVGDTVEIAKRNDAIVVAPFELATFLGWQGVKTHPMHIGGAHEFDFGKVKFTQAFHGSSYIDEENKTITYTGMPAGILFTAEEKTIYHAGDTALFSDMKLIGDRNDIELAFLPIGDNFTMGPEDAALAVKWIDAKTVVPMHYNTFPVIEQDPHRFVEKLTNCTGRVLEVGESITL.

It belongs to the UPF0173 family.

The sequence is that of UPF0173 metal-dependent hydrolase Bcer98_3294 from Bacillus cytotoxicus (strain DSM 22905 / CIP 110041 / 391-98 / NVH 391-98).